A 902-amino-acid chain; its full sequence is Aconitate hydratase A (902 aa).

Residues Cys441, Cys507, and Cys510 each coordinate [4Fe-4S] cluster.

The protein belongs to the aconitase/IPM isomerase family. In terms of assembly, monomer. [4Fe-4S] cluster serves as cofactor.

It catalyses the reaction citrate = D-threo-isocitrate. The enzyme catalyses (2S,3R)-3-hydroxybutane-1,2,3-tricarboxylate = 2-methyl-cis-aconitate + H2O. It functions in the pathway carbohydrate metabolism; tricarboxylic acid cycle; isocitrate from oxaloacetate: step 2/2. The protein operates within organic acid metabolism; propanoate degradation. Functionally, involved in the catabolism of short chain fatty acids (SCFA) via the tricarboxylic acid (TCA)(acetyl degradation route) and probably the 2-methylcitrate cycle I (propionate degradation route). Catalyzes the reversible isomerization of citrate to isocitrate via cis-aconitate. Also able to catalyze the hydration of cis-homoaconitate to yield (R)-homocitrate, but with a lower efficiency. Could catalyze the hydration of 2-methyl-cis-aconitate to yield (2R,3S)-2-methylisocitrate. The apo form of AcnA functions as a RNA-binding regulatory protein. The chain is Aconitate hydratase A (acoA) from Thermus thermophilus (strain ATCC 27634 / DSM 579 / HB8).